We begin with the raw amino-acid sequence, 308 residues long: 4-hydroxy-3-methylbut-2-enyl diphosphate reductase 2 (308 aa).

C12 is a [4Fe-4S] cluster binding site. Residues H41 and H74 each coordinate (2E)-4-hydroxy-3-methylbut-2-enyl diphosphate. Dimethylallyl diphosphate-binding residues include H41 and H74. 2 residues coordinate isopentenyl diphosphate: H41 and H74. Residue C96 coordinates [4Fe-4S] cluster. (2E)-4-hydroxy-3-methylbut-2-enyl diphosphate is bound at residue H124. H124 provides a ligand contact to dimethylallyl diphosphate. H124 is an isopentenyl diphosphate binding site. Residue E126 is the Proton donor of the active site. A (2E)-4-hydroxy-3-methylbut-2-enyl diphosphate-binding site is contributed by T164. C194 provides a ligand contact to [4Fe-4S] cluster. (2E)-4-hydroxy-3-methylbut-2-enyl diphosphate-binding residues include S222, S223, N224, and S266. Dimethylallyl diphosphate contacts are provided by S222, S223, N224, and S266. Isopentenyl diphosphate contacts are provided by S222, S223, N224, and S266.

This sequence belongs to the IspH family. [4Fe-4S] cluster serves as cofactor.

It carries out the reaction isopentenyl diphosphate + 2 oxidized [2Fe-2S]-[ferredoxin] + H2O = (2E)-4-hydroxy-3-methylbut-2-enyl diphosphate + 2 reduced [2Fe-2S]-[ferredoxin] + 2 H(+). It catalyses the reaction dimethylallyl diphosphate + 2 oxidized [2Fe-2S]-[ferredoxin] + H2O = (2E)-4-hydroxy-3-methylbut-2-enyl diphosphate + 2 reduced [2Fe-2S]-[ferredoxin] + 2 H(+). Its pathway is isoprenoid biosynthesis; dimethylallyl diphosphate biosynthesis; dimethylallyl diphosphate from (2E)-4-hydroxy-3-methylbutenyl diphosphate: step 1/1. The protein operates within isoprenoid biosynthesis; isopentenyl diphosphate biosynthesis via DXP pathway; isopentenyl diphosphate from 1-deoxy-D-xylulose 5-phosphate: step 6/6. Its function is as follows. Catalyzes the conversion of 1-hydroxy-2-methyl-2-(E)-butenyl 4-diphosphate (HMBPP) into a mixture of isopentenyl diphosphate (IPP) and dimethylallyl diphosphate (DMAPP). Acts in the terminal step of the DOXP/MEP pathway for isoprenoid precursor biosynthesis. This is 4-hydroxy-3-methylbut-2-enyl diphosphate reductase 2 from Bradyrhizobium diazoefficiens (strain JCM 10833 / BCRC 13528 / IAM 13628 / NBRC 14792 / USDA 110).